Here is a 422-residue protein sequence, read N- to C-terminus: Adenylosuccinate synthetase (422 aa).

GTP contacts are provided by residues 11 to 17 (GDEGKGK) and 39 to 41 (GHT). Catalysis depends on aspartate 12, which acts as the Proton acceptor. The Mg(2+) site is built by aspartate 12 and glycine 39. Residues 12 to 15 (DEGK), 37 to 40 (NAGH), threonine 129, arginine 143, asparagine 219, threonine 234, and arginine 298 each bind IMP. Catalysis depends on histidine 40, which acts as the Proton donor. 294–300 (VTTGRRR) is a substrate binding site. GTP contacts are provided by residues arginine 300, 326–328 (KLD), and 409–411 (GTG).

It belongs to the adenylosuccinate synthetase family. In terms of assembly, homodimer. The cofactor is Mg(2+).

The protein localises to the cytoplasm. It carries out the reaction IMP + L-aspartate + GTP = N(6)-(1,2-dicarboxyethyl)-AMP + GDP + phosphate + 2 H(+). It participates in purine metabolism; AMP biosynthesis via de novo pathway; AMP from IMP: step 1/2. Its function is as follows. Plays an important role in the de novo pathway and in the salvage pathway of purine nucleotide biosynthesis. Catalyzes the first committed step in the biosynthesis of AMP from IMP. The protein is Adenylosuccinate synthetase of Ajellomyces capsulatus (strain H143) (Darling's disease fungus).